Reading from the N-terminus, the 209-residue chain is Ephrin-A2 (209 aa).

An N-terminal signal peptide occupies residues 1-20 (MAPAQRPLLPLLLLLLPLRA). The Ephrin RBD domain occupies 30–170 (ADRYAVYWNR…RLKVYVRPTN (141 aa)). A glycan (N-linked (GlcNAc...) asparagine) is linked at asparagine 38. 2 disulfide bridges follow: cysteine 69–cysteine 110 and cysteine 98–cysteine 159. N-linked (GlcNAc...) asparagine glycans are attached at residues asparagine 170 and asparagine 184. Asparagine 184 carries GPI-anchor amidated asparagine lipidation. A propeptide spans 185-209 (SSCSGLGGCHLFLTTVPVLWSLLGS) (removed in mature form).

Belongs to the ephrin family. Binds to the receptor tyrosine kinases EPHA3, EPHA4 and EPHA5. Interacts with EPHA8; activates EPHA8. In terms of tissue distribution, expressed in myogenic progenitor cells.

The protein localises to the cell membrane. Functionally, cell surface GPI-bound ligand for Eph receptors, a family of receptor tyrosine kinases which are crucial for migration, repulsion and adhesion during neuronal, vascular and epithelial development. Binds promiscuously Eph receptors residing on adjacent cells, leading to contact-dependent bidirectional signaling into neighboring cells. The signaling pathway downstream of the receptor is referred to as forward signaling while the signaling pathway downstream of the ephrin ligand is referred to as reverse signaling. With the EPHA2 receptor may play a role in bone remodeling through regulation of osteoclastogenesis and osteoblastogenesis. In Mus musculus (Mouse), this protein is Ephrin-A2 (Efna2).